Reading from the N-terminus, the 186-residue chain is Methyl-CpG-binding domain protein 3-like 1 (186 aa).

Residues 1–104 (MGKTSQRKQC…TSTDTVASAS (104 aa)) are transcription repressor.

The protein belongs to the MBD3L family. As to expression, highly expressed in testis. Not detected in the other tissues tested.

Its subcellular location is the nucleus. In terms of biological role, transcriptional repressor. The protein is Methyl-CpG-binding domain protein 3-like 1 (Mbd3l1) of Mus musculus (Mouse).